We begin with the raw amino-acid sequence, 467 residues long: Probable rhamnogalacturonase A (467 aa).

A signal peptide spans 1 to 19 (MHSLSLISLALLSPLLVNA). A disulfide bond links C40 and C66. D217 functions as the Proton donor in the catalytic mechanism. C219 and C236 form a disulfide bridge. N237 and N252 each carry an N-linked (GlcNAc...) asparagine glycan. H292 is an active-site residue. Residue N319 is glycosylated (N-linked (GlcNAc...) asparagine). Intrachain disulfides connect C342–C348 and C370–C379.

This sequence belongs to the glycosyl hydrolase 28 family.

Its subcellular location is the secreted. It carries out the reaction Endohydrolysis of alpha-D-GalA-(1-&gt;2)-alpha-L-Rha glycosidic bond in the rhamnogalacturonan I backbone with initial inversion of anomeric configuration releasing oligosaccharides with beta-D-GalA at the reducing end.. Pectinolytic enzymes consist of four classes of enzymes: pectine lyase, polygalacturonase, pectin methylesterase and rhamnogalacturonase. Hydrolyzes alpha-D-galacturonopyranosyl-(1,2)-alpha-L-rhamnopyranosyl linkages in the backbone of the hairy regions of pectins. The polypeptide is Probable rhamnogalacturonase A (rhgA) (Aspergillus oryzae (strain ATCC 42149 / RIB 40) (Yellow koji mold)).